A 538-amino-acid chain; its full sequence is Syncytin-2 (538 aa).

A signal peptide spans 1–15; that stretch reads MGLLLLVLILTPSLA. At 16-478 the chain is on the extracellular side; it reads AYRHPDFPLL…GWLNWEGTWK (463 aa). Residues 43–46 carry the CXXC motif; the sequence is CWLC. 3 cysteine pairs are disulfide-bonded: cysteine 43-cysteine 46, cysteine 43-cysteine 439, and cysteine 431-cysteine 438. 8 N-linked (GlcNAc...) asparagine glycosylation sites follow: asparagine 133, asparagine 146, asparagine 177, asparagine 220, asparagine 241, asparagine 247, asparagine 312, and asparagine 332. The tract at residues 354–374 is fusion peptide; sequence FIPLLAGLGILAGTGTGIAGI. Residues 414 to 430 carry the CKS-17 motif; it reads LQNRRGLDMLTAAQGGI. Positions 431–439 match the CX6CC motif; it reads CLALDEKCC. N-linked (GlcNAc...) asparagine glycosylation is present at asparagine 443. A helical membrane pass occupies residues 479–499; that stretch reads WFSWVLPLTGPLVSLLLLLLF. Topologically, residues 500-538 are cytoplasmic; sequence GPCLLNLITQFVSSRLQAIKLQTNLSAGRHPRNIQESPF.

This sequence belongs to the gamma type-C retroviral envelope protein family. HERV class-I FRD env subfamily. In terms of assembly, the surface and transmembrane proteins form a heterodimer. They are attached by non-covalent interactions or by a labile interchain disulfide bond. Interacts with MFSD2A. Post-translationally, specific enzymatic cleavages in vivo yield the mature SU and TM proteins. In terms of processing, the CXXC motif is highly conserved across a broad range of retroviral envelope proteins. It is thought to participate in the formation of a labile disulfide bond possibly with the CX6CC motif present in the transmembrane protein. Isomerization of the intersubunit disulfide bond to an SU intrachain disulfide bond is thought to occur upon receptor recognition in order to allow membrane fusion. In terms of tissue distribution, expressed at higher level in placenta. Expressed at lower level in adrenal, bone marrow, brain, breast, colon, kidney, lung, ovary, peripheral blood lymphocytes, prostate, skin, spleen, testis, thymus, thyroid, trachea.

The protein localises to the virion. It is found in the cell membrane. Its function is as follows. This endogenous retroviral envelope protein has retained its original fusogenic properties and participates in trophoblast fusion and the formation of a syncytium during placenta morphogenesis. The interaction with MFSD2A is apparently important for this process. Functionally, endogenous envelope proteins may have kept, lost or modified their original function during evolution but this one can still make pseudotypes with MLV, HIV-1 or SIV-1 virions and confer infectivity. Retroviral envelope proteins mediate receptor recognition and membrane fusion during early infection. The surface protein mediates receptor recognition, while the transmembrane protein anchors the envelope heterodimer to the viral membrane through one transmembrane domain. The other hydrophobic domain, called fusion peptide, mediates fusion of the viral membrane with the target cell membrane. The polypeptide is Syncytin-2 (ERVFRD-1) (Homo sapiens (Human)).